The primary structure comprises 280 residues: MKLRASVLIGATILCLILSACSNYAKKVVKQKNHVYTPVYNELIEKYSEIPLNDKLKDTPFMVQVKLPNYKDYLLDNKQVVLTFKLVHHSKKITLIGDANKILQYKNYFQANGARSDIDFYLQPTLNQKGVVMIASNYNDNPNSKEKPQTFDVLQGSQPMLGANTKNLHGYDVSGANNKQVINEVAREKAQLEKINQYYKTLLQDKEQEYTTRKNNQREILETLSNRAGYQMRQNVISSEIFKNGNLNMQAKEEEVREKLQEERENEYLRNQIRSLLSGK.

A signal peptide spans 1–20 (MKLRASVLIGATILCLILSA). Cys-21 is lipidated: N-palmitoyl cysteine. Cys-21 carries S-diacylglycerol cysteine lipidation.

Its subcellular location is the cell membrane. This chain is CAG pathogenicity island protein 12 (cagT), found in Helicobacter pylori (strain ATCC 700392 / 26695) (Campylobacter pylori).